Consider the following 419-residue polypeptide: CinA-like protein (419 aa).

Belongs to the CinA family.

In Synechococcus sp. (strain CC9902), this protein is CinA-like protein.